The following is a 219-amino-acid chain: Endonuclease III (219 aa).

The HhH domain maps to 117 to 136; sequence MEELLTLPGVARKTANVVLA. Positions 197, 204, 207, and 213 each coordinate [4Fe-4S] cluster.

The protein belongs to the Nth/MutY family. Requires [4Fe-4S] cluster as cofactor.

It carries out the reaction 2'-deoxyribonucleotide-(2'-deoxyribose 5'-phosphate)-2'-deoxyribonucleotide-DNA = a 3'-end 2'-deoxyribonucleotide-(2,3-dehydro-2,3-deoxyribose 5'-phosphate)-DNA + a 5'-end 5'-phospho-2'-deoxyribonucleoside-DNA + H(+). Its function is as follows. DNA repair enzyme that has both DNA N-glycosylase activity and AP-lyase activity. The DNA N-glycosylase activity releases various damaged pyrimidines from DNA by cleaving the N-glycosidic bond, leaving an AP (apurinic/apyrimidinic) site. The AP-lyase activity cleaves the phosphodiester bond 3' to the AP site by a beta-elimination, leaving a 3'-terminal unsaturated sugar and a product with a terminal 5'-phosphate. This chain is Endonuclease III, found in Synechocystis sp. (strain ATCC 27184 / PCC 6803 / Kazusa).